The primary structure comprises 317 residues: Eukaryotic translation initiation factor 2 subunit 2 (317 aa).

The interval Met-1–Gly-146 is disordered. Positions Ala-79 to Asp-90 are enriched in basic and acidic residues. The span at Lys-109–Pro-125 shows a compositional bias: low complexity. Residues His-222–Arg-246 form a C4-type zinc finger.

It belongs to the eIF-2-beta/eIF-5 family. As to quaternary structure, eukaryotic translation initiation factor 2 eIF2 is a heterotrimeric complex composed of an alpha, a beta and a gamma subunit.

Its subcellular location is the cytoplasm. The protein resides in the cytosol. Component of the eIF2 complex that functions in the early steps of protein synthesis by forming a ternary complex with GTP and initiator tRNA. This complex binds to a 40S ribosomal subunit, followed by mRNA binding to form a 43S pre-initiation complex (43S PIC). Junction of the 60S ribosomal subunit to form the 80S initiation complex is preceded by hydrolysis of the GTP bound to eIF2 and release of an eIF2-GDP binary complex. In order for eIF2 to recycle and catalyze another round of initiation, the GDP bound to eIF2 must exchange with GTP by way of a reaction catalyzed by eIF2B. The chain is Eukaryotic translation initiation factor 2 subunit 2 (eif2s2) from Dictyostelium discoideum (Social amoeba).